The primary structure comprises 175 residues: B9 domain-containing protein 2 (175 aa).

Positions 2 to 118 (AEVHVIGQIM…DCPTWRPLGS (117 aa)) constitute a C2 B9-type domain.

Belongs to the B9D family. As to quaternary structure, part of the tectonic-like complex (also named B9 complex). Interacts with TUBG1.

Its subcellular location is the cytoplasm. It is found in the cytoskeleton. The protein resides in the cilium basal body. The protein localises to the cilium axoneme. It localises to the nucleus. Its function is as follows. Component of the tectonic-like complex, a complex localized at the transition zone of primary cilia and acting as a barrier that prevents diffusion of transmembrane proteins between the cilia and plasma membranes. The sequence is that of B9 domain-containing protein 2 (B9D2) from Bos taurus (Bovine).